The sequence spans 571 residues: MRTSQYLFSTLKETPNDAQVVSHQLMLRAGMIRPLASGMYNWLPTGLRVLKKVENIIREEMNKSGALEVEMPVVQPADLWVESERWEDYGPELLRFKDRGDRPFVLGPTHEEVITDLVRREVSSYKQLPLNLYQIQTKFRDEVRPRFGVMRGREFLMKDAYSFHTSKESLQETYDVMHQTYSNIFTRLGLDFRPVAADTGSIGGSASHEFQVLAQSGEDDVVFSTESDYAANIELAEAIAVGERQAPTAEMTLVDTPNAKTIAELVEQFNLPIEKTVKTLIVKGASEEQPLVALVIRGDHELNEIKAVKCEEVAEPFEFADEAEIKAKIGAGIGSLGPVNMPIPVIIDRSVALMSDFGAGANIDGKHYFNINWERDVALPKIADLRNVVEGDPSPDGKGTLLIKRGIEVGHIFQLGTKYSEAMKATVQGEDGRPQTMIMGCYGIGVTRVVAAAIEQHHDERGIIWPTDAIAPFTVAVVPMNMHKSESVQTFAEDLYKTLRSQGVDVIFDDRKERPGVMFADMELIGVPHMLVIGEKNLENGEIEYKNRRTGEKQMIAKDQLLDFLKGRINQ.

This sequence belongs to the class-II aminoacyl-tRNA synthetase family. ProS type 1 subfamily. In terms of assembly, homodimer.

It is found in the cytoplasm. The catalysed reaction is tRNA(Pro) + L-proline + ATP = L-prolyl-tRNA(Pro) + AMP + diphosphate. In terms of biological role, catalyzes the attachment of proline to tRNA(Pro) in a two-step reaction: proline is first activated by ATP to form Pro-AMP and then transferred to the acceptor end of tRNA(Pro). As ProRS can inadvertently accommodate and process non-cognate amino acids such as alanine and cysteine, to avoid such errors it has two additional distinct editing activities against alanine. One activity is designated as 'pretransfer' editing and involves the tRNA(Pro)-independent hydrolysis of activated Ala-AMP. The other activity is designated 'posttransfer' editing and involves deacylation of mischarged Ala-tRNA(Pro). The misacylated Cys-tRNA(Pro) is not edited by ProRS. This Glaesserella parasuis serovar 5 (strain SH0165) (Haemophilus parasuis) protein is Proline--tRNA ligase.